The primary structure comprises 236 residues: Rab-like protein 3 (236 aa).

The small GTPase-like stretch occupies residues 1-236 (MASLDRVKVL…AGTLKSLHYD (236 aa)). GTP is bound by residues 16–21 (GVGKSS), 148–150 (KLD), and 179–180 (DC).

It belongs to the small GTPase superfamily. Rab family. Homodimer. Interacts with GPR89; the interaction stabilizes GPR89. Interacts with RAP1GDS1.

Functionally, required for KRAS signaling regulation and modulation of cell proliferation. Regulator of KRAS prenylation, and probably prenylation of other small GTPases. Required for lymphocyte development and function. Not required for myeloid cell development. The chain is Rab-like protein 3 (RABL3) from Homo sapiens (Human).